The primary structure comprises 448 residues: Ribosomal protein uS12 methylthiotransferase RimO (448 aa).

Residues 10–120 enclose the MTTase N-terminal domain; that stretch reads PNIGFVSLGC…VMEHVHKYVP (111 aa). The [4Fe-4S] cluster site is built by Cys-19, Cys-55, Cys-84, Cys-152, Cys-156, and Cys-159. The Radical SAM core domain occupies 138–379; that stretch reads LTPKHYAYLK…MELQQQISAQ (242 aa). Positions 382 to 448 constitute a TRAM domain; that stretch reads QQKIGKTLPV…ADEYDLWGTC (67 aa).

This sequence belongs to the methylthiotransferase family. RimO subfamily. [4Fe-4S] cluster serves as cofactor.

It is found in the cytoplasm. It catalyses the reaction L-aspartate(89)-[ribosomal protein uS12]-hydrogen + (sulfur carrier)-SH + AH2 + 2 S-adenosyl-L-methionine = 3-methylsulfanyl-L-aspartate(89)-[ribosomal protein uS12]-hydrogen + (sulfur carrier)-H + 5'-deoxyadenosine + L-methionine + A + S-adenosyl-L-homocysteine + 2 H(+). In terms of biological role, catalyzes the methylthiolation of an aspartic acid residue of ribosomal protein uS12. This Mannheimia succiniciproducens (strain KCTC 0769BP / MBEL55E) protein is Ribosomal protein uS12 methylthiotransferase RimO.